A 404-amino-acid chain; its full sequence is Cysteine desulfurase IscS (404 aa).

Pyridoxal 5'-phosphate is bound by residues 75–76 (AT), asparagine 155, glutamine 183, and 203–205 (SGH). N6-(pyridoxal phosphate)lysine is present on lysine 206. Position 243 (threonine 243) interacts with pyridoxal 5'-phosphate. The Cysteine persulfide intermediate role is filled by cysteine 328. Cysteine 328 is a [2Fe-2S] cluster binding site.

Belongs to the class-V pyridoxal-phosphate-dependent aminotransferase family. NifS/IscS subfamily. As to quaternary structure, homodimer. Forms a heterotetramer with IscU, interacts with other sulfur acceptors. Pyridoxal 5'-phosphate serves as cofactor.

Its subcellular location is the cytoplasm. It catalyses the reaction (sulfur carrier)-H + L-cysteine = (sulfur carrier)-SH + L-alanine. It participates in cofactor biosynthesis; iron-sulfur cluster biosynthesis. In terms of biological role, master enzyme that delivers sulfur to a number of partners involved in Fe-S cluster assembly, tRNA modification or cofactor biosynthesis. Catalyzes the removal of elemental sulfur atoms from cysteine to produce alanine. Functions as a sulfur delivery protein for Fe-S cluster synthesis onto IscU, an Fe-S scaffold assembly protein, as well as other S acceptor proteins. This Edwardsiella ictaluri (strain 93-146) protein is Cysteine desulfurase IscS.